A 957-amino-acid chain; its full sequence is MPLIMEDGINVDDLFGEPGSLELGLSPPSNAPIKGLPQRLDEMRLVGCCQKIAWSRLGCVAYITPDGMRVNVRHLQCRPSDGKWVLSEDTPLLPVTEAHGGHPLVHLCWNETGAELAVADSSGRVSIYSISIALNSIAGHRQATSDPDDDGAQIVGMMWLNVNRVVHAFHQAAKVQGRWAYSPFRRRPIGPFHPVNKAGLVCVTRSGTIRLLYQNPDSRWAEISTELKNTGYSDRLLTHAALVSTQGGVLVATHSACQKLCLYRVQIAWNPTQYDPGQQKPPAPWPVPSFRFLHCKVESLCDVIGTNRNPGDNQGLPSFTNSVYGLTRLDIILPALDNPAGSTSTPWIVAVYSSPLHATPDHPQQQSPASVIVRWQLDTGAVTLHPKFDEVGSKKSSAQMKPKLELRRLEDIYSDRYAISIDQIEYGNVLAITYEDGSIVFHDPKTMAVFNGVDDTNTVTSLAQAGFHYPPEASGLHMAFSPNACAAVMLDAEGQTQLRLTEHTYGAEGGLHDENKYSAAIAALTLAFCRGCGSDVNIDDVILILVRQLSSEAQINFINEVYRALSVNCNFTMEQDKLMNHIYIPRCLSLQAALGFKDKYTPRSSPSAIPWAILQLRHASVLYAFFFQYNKGAPTESHDPDVLRMVLGNTKWALEFSFYVSNELFDLADEFESMASDQEAFTQKLKSTTSLPLIILLSSMSRAFLRFICRGLRGIHAGYATAAPLTGDARVYYAEIYQTLENSPVRIDAYEKFLAGVDSAVRHAYHSAGFGDAERPGPEKELLVNARVPPVLVSAVATILRQTVPALKSEIDRITIYMGNYSWLGLAHDRRTEMYRRTRDVDIIKKIPLRSLGPYTEVDAAPSGKTNAQGPPQQPQPQQQRRRRCVRCCEISGDTHPPRSLLSFRMIAKLGLLRSCVCGGMWTLVEPEVSAPAADPPVSQATGRTPALMAIGLAGSS.

The tract at residues tyrosine 855–arginine 883 is disordered.

Belongs to the Mediator complex subunit 16 family. In terms of assembly, component of the Mediator complex.

The protein resides in the nucleus. Functionally, component of the Mediator complex, a coactivator involved in the regulated transcription of nearly all RNA polymerase II-dependent genes. Mediator functions as a bridge to convey information from gene-specific regulatory proteins to the basal RNA polymerase II transcription machinery. Mediator is recruited to promoters by direct interactions with regulatory proteins and serves as a scaffold for the assembly of a functional preinitiation complex with RNA polymerase II and the general transcription factors. The chain is Mediator of RNA polymerase II transcription subunit 16 (sin4) from Aspergillus clavatus (strain ATCC 1007 / CBS 513.65 / DSM 816 / NCTC 3887 / NRRL 1 / QM 1276 / 107).